Consider the following 1556-residue polypeptide: MESIVYDSDFSDDEVSALTLDNLPYTRKRIISDRRLLRHFGGLTDVTPGITLSVPEPNSVVKPWLIFPVEKGVLSVEIITAGTVVNKDLVDGRGWIHETTCVTEPSLPSVNTITLGIVDFVSRSIVASGSEIFLLLTTDPGEGIGFKRMPCINTAGVTGAKISREVITDAPVVLYDDIYSLFHLTASLPRDVFLDCTGMTQAELERFAGLHLGSVPDWRYTPRKILISPPHYLTMNLTTLETWDSSDLLPPEPGFLQDVFIAAPSPKLRYTDDCMSAIKRTDTGVVIHGEPDVFFSFAENRVETLEFCAVDAPYPNPPQMSLVEDMTRKVVRTEAAIGTLTVELAPPDGVPEPLYSAEYVTVTHDRELRAYACVTSPALRTIVIGALGRNGVLHLLQHMELMVTMGFRDFRWKFREGNRELMYFVEAFIAAIPAPCAERMHVRIVLSRGHGSFRLWESGSHFRFRLMADPWSMSPNPRASNVVIRRPRQGVSLPPRRNPPRIIYEWTAMVRVTARTGALVSTRELTAEYRRALSITYNMIGDMLYIPVEPVLDGGGERLLDLPLLFTGFAFQWAEPPVVDSDAVSAGSRRAVIALHRLDYLEDAHVAVICSNVFMGTTACGAALQVAPADLPPGPFTVDLSVKPTDNPDVKLQQLTHRRNGFCGAYYDEAVTTGWFLGLLSGERMSIKDPSACLMSFYEKLHPIFLHGAKIGKCYVAHTFHPCTVDFVGCIVATSHMIQVADNVIIMARNPSSATCDTKFTIDSFNESVVRAIFKPENWIERYAQLFGPAYVMENTGHVVRFNGTGREVVKLTGIYPDTRTPGVQLVVTIDGREFVIIPLGFSPMLVIDGRIAWYDLTAPGILVTSTTNNWVVIAENSRKMIERPSYGMSYECYRIEDRSDDLPSCPPQGRFWRTGPRDILRDPIFEHMVQRAVDGHTTLRNTVGAVELFREIPGIINTWTSYRVVPDRGYVPVGATGAMAVSDAPMREQLMALTSDTELSFKYPRANWYSENILSLGHGAIIKWQTVIITRKPDDPPIAHGGVKITVLKEPLGLLNDTELRPGIYERRQIPWAHHLVVTDFRLLFGTLLIATTLHRYVHVIVDAHGAGEQILKMALEQAPLFNEPKRVVITGLPSSALPATIYLGAMDPRNIRVAVTGGQELKNSVRDKLAGVMRYVSGDDFDVGITDREFFYAITGTGRAVESFMLRDPARYIVELAPEGSLPVYRDPFNPIGEVTGRFWFDEVPNPIAILTDSETNVYMMSRGDIITPGERRVVDLPEYSAWTPERLQEEPPPTTFLGSGDVAIVTLRRRPPVGTRTKSLRLTIRNGVTMVLQRRDIVKVRLVDREAVKTSGLLVTSHSIGHTDDVYVPVAGGPLDYYAKIWSFHGLGGEEPCLDVVTPADCLAVAGAVRLFLVSLTHPVTFGCVNIVIPRALRPRFIRYFGTPIVMDRVLYDISIDRILTVGERDGDRRGVIHETRVNSDEWSRKLYFLKQRLISSGRHRKYWTERLTGTRLATHDNRWLGAAWLTVGDGTTRRLLSRENFIRCGRSTPQGQ.

This is an uncharacterized protein from Ictalurid herpesvirus 1 (strain Auburn) (IcHV-1).